The primary structure comprises 350 residues: Protein O-mannose kinase (350 aa).

N-acetylmethionine is present on Met1. The Cytoplasmic portion of the chain corresponds to 1-20; it reads MEKQPQNKRRGLAPREVPPA. A helical; Signal-anchor for type II membrane protein membrane pass occupies residues 21–43; that stretch reads VGLLLIMALMNTLLYLCLDHFFI. Topologically, residues 44–350 are lumenal; it reads APRQSIVDPR…AVMSQAREML (307 aa). The region spanning 81–350 is the Protein kinase domain; that stretch reads VRQLKRVGEG…AVMSQAREML (270 aa). Asn165, Asn220, and Asn235 each carry an N-linked (GlcNAc...) asparagine glycan.

This sequence belongs to the protein kinase superfamily. Ser/Thr protein kinase family. STKL subfamily.

Its subcellular location is the endoplasmic reticulum membrane. The catalysed reaction is 3-O-[beta-D-GalNAc-(1-&gt;3)-beta-D-GlcNAc-(1-&gt;4)-alpha-D-Man]-L-Thr-[protein] + ATP = 3-O-[beta-D-GalNAc-(1-&gt;3)-beta-D-GlcNAc-(1-&gt;4)-(O-6-P-alpha-D-Man)]-Thr-[protein] + ADP + H(+). Protein O-mannose kinase that specifically mediates phosphorylation at the 6-position of an O-mannose of the trisaccharide (N-acetylgalactosamine (GalNAc)-beta-1,3-N-acetylglucosamine (GlcNAc)-beta-1,4-mannose) to generate phosphorylated O-mannosyl trisaccharide (N-acetylgalactosamine-beta-1,3-N-acetylglucosamine-beta-1,4-(phosphate-6-)mannose). Phosphorylated O-mannosyl trisaccharide is a carbohydrate structure present in alpha-dystroglycan (DAG1), which is required for binding laminin G-like domain-containing extracellular proteins with high affinity. Only shows kinase activity when the GalNAc-beta-3-GlcNAc-beta-terminus is linked to the 4-position of O-mannose, suggesting that this disaccharide serves as the substrate recognition motif. This Macaca fascicularis (Crab-eating macaque) protein is Protein O-mannose kinase (POMK).